Consider the following 156-residue polypeptide: Ribosome maturation factor RimP (156 aa).

The protein belongs to the RimP family.

The protein resides in the cytoplasm. Functionally, required for maturation of 30S ribosomal subunits. The protein is Ribosome maturation factor RimP of Treponema pallidum (strain Nichols).